The sequence spans 213 residues: Golgi to ER traffic protein 1 (213 aa).

Over 1 to 4 (MESW) the chain is Lumenal. A helical membrane pass occupies residues 5 to 25 (LLVILAFLVLERLWPLIDSLI). Residues 26–98 (QRFAQANSTK…RTKASLKKVK (73 aa)) lie on the Cytoplasmic side of the membrane. The stretch at 55–99 (AQDQYVKWTKNNRTLEKINKQIEEEKKQLLSQVDRTKASLKKVKL) forms a coiled coil. Residues 99–119 (LVLITVPFTILKFYKGKMPIY) traverse the membrane as a helical segment. Residues 120 to 158 (DLPKGLFPNYLQGLFQHGWVYLALGPLNIKKVGDGTHVT) are Lumenal-facing. The chain crosses the membrane as a helical span at residues 159-175 (VSLAIWLFALLKVVSTL). Over 176–213 (GNIWESLTAPAIPAPTITTDPIDQTNESEKPPVDQPVD) the chain is Cytoplasmic. A disordered region spans residues 193-213 (TTDPIDQTNESEKPPVDQPVD).

The protein belongs to the WRB/GET1 family. Component of the Golgi to ER traffic (GET) complex, which is composed of GET1, GET2 and GET3. Within the complex, GET1 and GET2 form a heterotetramer which is stabilized by phosphatidylinositol binding and which binds to the GET3 homodimer.

Its subcellular location is the endoplasmic reticulum membrane. The protein resides in the golgi apparatus membrane. Required for the post-translational delivery of tail-anchored (TA) proteins to the endoplasmic reticulum. Together with GET2, acts as a membrane receptor for soluble GET3, which recognizes and selectively binds the transmembrane domain of TA proteins in the cytosol. The GET complex cooperates with the HDEL receptor ERD2 to mediate the ATP-dependent retrieval of resident ER proteins that contain a C-terminal H-D-E-L retention signal from the Golgi to the ER. The sequence is that of Golgi to ER traffic protein 1 from Kluyveromyces lactis (strain ATCC 8585 / CBS 2359 / DSM 70799 / NBRC 1267 / NRRL Y-1140 / WM37) (Yeast).